The chain runs to 315 residues: Coproporphyrin III ferrochelatase (315 aa).

Fe-coproporphyrin III contacts are provided by residues tyrosine 13, arginine 30, 46-47 (RY), serine 54, and tyrosine 125. Residues histidine 183 and glutamate 264 each coordinate Fe(2+).

It belongs to the ferrochelatase family.

Its subcellular location is the cytoplasm. The enzyme catalyses Fe-coproporphyrin III + 2 H(+) = coproporphyrin III + Fe(2+). The protein operates within porphyrin-containing compound metabolism; protoheme biosynthesis. In terms of biological role, involved in coproporphyrin-dependent heme b biosynthesis. Catalyzes the insertion of ferrous iron into coproporphyrin III to form Fe-coproporphyrin III. The protein is Coproporphyrin III ferrochelatase of Anoxybacillus flavithermus (strain DSM 21510 / WK1).